Consider the following 849-residue polypeptide: Alanine--tRNA ligase (849 aa).

Zn(2+) contacts are provided by His-551, His-555, Cys-653, and His-657.

Belongs to the class-II aminoacyl-tRNA synthetase family. Zn(2+) serves as cofactor.

It is found in the cytoplasm. The catalysed reaction is tRNA(Ala) + L-alanine + ATP = L-alanyl-tRNA(Ala) + AMP + diphosphate. Functionally, catalyzes the attachment of alanine to tRNA(Ala) in a two-step reaction: alanine is first activated by ATP to form Ala-AMP and then transferred to the acceptor end of tRNA(Ala). Also edits incorrectly charged Ser-tRNA(Ala) and Gly-tRNA(Ala) via its editing domain. This is Alanine--tRNA ligase from Sulfurimonas denitrificans (strain ATCC 33889 / DSM 1251) (Thiomicrospira denitrificans (strain ATCC 33889 / DSM 1251)).